The sequence spans 155 residues: Small ribosomal subunit protein bS16 (155 aa).

Residues 100–155 (EAGIPDPAPSTEEPAAVCEASAEMAGQPGEVEPAGAAAEPNSQEPEPEEEKPQVEA) are disordered. A compositionally biased stretch (low complexity) spans 124–143 (AGQPGEVEPAGAAAEPNSQE).

This sequence belongs to the bacterial ribosomal protein bS16 family.

The chain is Small ribosomal subunit protein bS16 from Synechococcus sp. (strain JA-3-3Ab) (Cyanobacteria bacterium Yellowstone A-Prime).